Reading from the N-terminus, the 483-residue chain is Regulatory protein ViaA (483 aa).

It belongs to the ViaA family. As to quaternary structure, homodimer. Interacts with RavA.

The protein resides in the cytoplasm. In terms of biological role, component of the RavA-ViaA chaperone complex, which may act on the membrane to optimize the function of some of the respiratory chains. ViaA stimulates the ATPase activity of RavA. This chain is Regulatory protein ViaA, found in Shigella boydii serotype 18 (strain CDC 3083-94 / BS512).